Consider the following 370-residue polypeptide: DNA repair protein RAD51 homolog 2 (370 aa).

Position 109–116 (109–116 (GPPGIGKS)) interacts with ATP.

It belongs to the RecA family. RAD51 subfamily. In terms of tissue distribution, preferentially expressed in flower buds and roots.

It localises to the nucleus. Its function is as follows. May be involved in the homologous recombination repair (HRR) pathway of double-stranded DNA breaks arising during DNA replication or induced by DNA-damaging agents. This is DNA repair protein RAD51 homolog 2 (RAD51B) from Arabidopsis thaliana (Mouse-ear cress).